The following is a 297-amino-acid chain: Homoserine kinase (297 aa).

82 to 92 (PLTRGLGSSAS) contributes to the ATP binding site.

Belongs to the GHMP kinase family. Homoserine kinase subfamily.

The protein resides in the cytoplasm. It catalyses the reaction L-homoserine + ATP = O-phospho-L-homoserine + ADP + H(+). Its pathway is amino-acid biosynthesis; L-threonine biosynthesis; L-threonine from L-aspartate: step 4/5. Catalyzes the ATP-dependent phosphorylation of L-homoserine to L-homoserine phosphate. The sequence is that of Homoserine kinase from Bacillus cereus (strain ZK / E33L).